The following is a 186-amino-acid chain: Casparian strip membrane protein 1 (186 aa).

At 1–26 (MKGGSIELGEVSKNASTNKGVKRGLS) the chain is on the cytoplasmic side. The helical transmembrane segment at 27–47 (IMDFILRIIAGVATLASAVAM) threads the bilayer. Residues 48-72 (GTTDERLPFATSFVQFRAEYDDLPS) are Extracellular-facing. The helical transmembrane segment at 73-93 (FVFFVLANSIVCGYLALSLIL) threads the bilayer. The Cytoplasmic segment spans residues 94 to 107 (SILHIVRSTAVKSR). A helical membrane pass occupies residues 108–128 (ILLIVLDMVMMGLLAAAASAA). At 129–157 (ASIVYIAHYGNTQANWFPICQQYNSFCER) the chain is on the extracellular side. The helical transmembrane segment at 158-178 (ISGSLIGSYIAVALFIIIILL) threads the bilayer. At 179-186 (SQSAISRN) the chain is on the cytoplasmic side.

It belongs to the Casparian strip membrane proteins (CASP) family. Homodimer and heterodimers.

Its subcellular location is the cell membrane. In terms of biological role, regulates membrane-cell wall junctions and localized cell wall deposition. Required for establishment of the Casparian strip membrane domain (CSD) and the subsequent formation of Casparian strips, a cell wall modification of the root endodermis that determines an apoplastic barrier between the intraorganismal apoplasm and the extraorganismal apoplasm and prevents lateral diffusion. The polypeptide is Casparian strip membrane protein 1 (Medicago truncatula (Barrel medic)).